Consider the following 81-residue polypeptide: Anaphase-promoting complex subunit emb-1 (81 aa).

The APC/C is probably composed of at least 12 subunits: apc-2, apc-10, apc-11, cdc-26, emb-1, emb-27, emb-30, mat-1, mat-2, mat-3, such-1 and gfi-3. In terms of tissue distribution, expressed in germ cells.

Its pathway is protein modification; protein ubiquitination. In terms of biological role, probable component of the anaphase promoting complex/cyclosome (APC/C), a cell cycle-regulated E3 ubiquitin ligase that controls progression through mitosis and the G1 phase of the cell cycle. The APC/C complex acts by mediating ubiquitination and subsequent degradation of target proteins. Developmental role in early embryogenesis and the metaphase to anaphase transition in meiosis and mitosis. May be required for germline proliferation. Required for male tail development and hermaphrodite vulva formation. This Caenorhabditis elegans protein is Anaphase-promoting complex subunit emb-1.